The chain runs to 236 residues: CHD1 helical C-terminal domain containing protein 1 (236 aa).

The interval 44–145 (LDQDTFKTCK…SSQPAKFLVT (102 aa)) is CHD1 helical C-terminal domain (CHCT). The disordered stretch occupies residues 184–236 (LSNMQTPGQGSPLPGQPRSQDHVKKDSLRELSQKPKLKRKRIKEAPETPETEP). A compositionally biased stretch (basic and acidic residues) spans 202-216 (SQDHVKKDSLRELSQ).

It localises to the cytoplasm. It is found in the nucleus. May play a role in regulation of apoptosis. In Homo sapiens (Human), this protein is CHD1 helical C-terminal domain containing protein 1.